Here is a 461-residue protein sequence, read N- to C-terminus: GTPase Der (461 aa).

2 EngA-type G domains span residues I2–P166 and I199–S370. Residues G8–S15, D57–L61, N118–D121, G205–S212, D252–I256, and N316–D319 each bind GTP. One can recognise a KH-like domain in the interval K371–G455.

This sequence belongs to the TRAFAC class TrmE-Era-EngA-EngB-Septin-like GTPase superfamily. EngA (Der) GTPase family. As to quaternary structure, associates with the 50S ribosomal subunit.

Functionally, GTPase that plays an essential role in the late steps of ribosome biogenesis. The protein is GTPase Der of Nautilia profundicola (strain ATCC BAA-1463 / DSM 18972 / AmH).